The primary structure comprises 619 residues: 1-deoxy-D-xylulose-5-phosphate synthase (619 aa).

Thiamine diphosphate is bound by residues His76 and 117 to 119 (AHS). A Mg(2+)-binding site is contributed by Asp148. Thiamine diphosphate is bound by residues 149–150 (GA), Asn177, Tyr284, and Glu366. Position 177 (Asn177) interacts with Mg(2+).

This sequence belongs to the transketolase family. DXPS subfamily. In terms of assembly, homodimer. Requires Mg(2+) as cofactor. Thiamine diphosphate is required as a cofactor.

The enzyme catalyses D-glyceraldehyde 3-phosphate + pyruvate + H(+) = 1-deoxy-D-xylulose 5-phosphate + CO2. The protein operates within metabolic intermediate biosynthesis; 1-deoxy-D-xylulose 5-phosphate biosynthesis; 1-deoxy-D-xylulose 5-phosphate from D-glyceraldehyde 3-phosphate and pyruvate: step 1/1. Catalyzes the acyloin condensation reaction between C atoms 2 and 3 of pyruvate and glyceraldehyde 3-phosphate to yield 1-deoxy-D-xylulose-5-phosphate (DXP). The protein is 1-deoxy-D-xylulose-5-phosphate synthase of Azoarcus sp. (strain BH72).